Here is a 428-residue protein sequence, read N- to C-terminus: Peptidase B (428 aa).

K195 and D200 together coordinate Mn(2+). The active site involves K207. 3 residues coordinate Mn(2+): D218, D277, and E279. R281 is an active-site residue.

This sequence belongs to the peptidase M17 family. As to quaternary structure, homohexamer. Mn(2+) serves as cofactor.

The protein localises to the cytoplasm. It catalyses the reaction Release of an N-terminal amino acid, Xaa, from a peptide or arylamide. Xaa is preferably Glu or Asp but may be other amino acids, including Leu, Met, His, Cys and Gln.. Functionally, probably plays an important role in intracellular peptide degradation. The protein is Peptidase B of Klebsiella pneumoniae subsp. pneumoniae (strain ATCC 700721 / MGH 78578).